The following is a 299-amino-acid chain: Tryptophan prenyltransferase ComQ (299 aa).

Positions 67 and 71 each coordinate Mg(2+).

This sequence belongs to the FPP/GGPP synthase family. It depends on Mg(2+) as a cofactor.

It localises to the cell membrane. The enzyme catalyses L-tryptophyl-[protein] + (2E,6E)-farnesyl diphosphate = (2S,3R)-3-farnesyl-2,3-dihydro-2,N(alpha)-cyclo-L-tryptophyl-[protein] + diphosphate. Functionally, part of a major quorum-sensing system that regulates the development of genetic competence. Involved in the maturation of the competence pheromone ComX. Acts by catalyzing the transfer of a farnesyl group on the ComX pheromone. Shows weak geranylation activity with geranyl diphosphate (GPP). This Bacillus subtilis (strain 168) protein is Tryptophan prenyltransferase ComQ.